The primary structure comprises 630 residues: Chaperone protein HtpG (630 aa).

The tract at residues 1–338 is a; substrate-binding; it reads MTVEANKETL…SNDLSLNVSR (338 aa). Positions 339–555 are b; sequence EILQNDSTVE…QFDMGAQMKK (217 aa). Residues 556 to 630 are c; sequence IMEAAGQKVP…LNRLLLELAN (75 aa).

Belongs to the heat shock protein 90 family. As to quaternary structure, homodimer.

The protein resides in the cytoplasm. Functionally, molecular chaperone. Has ATPase activity. The protein is Chaperone protein HtpG of Marinobacter nauticus (strain ATCC 700491 / DSM 11845 / VT8) (Marinobacter aquaeolei).